We begin with the raw amino-acid sequence, 57 residues long: Large ribosomal subunit protein bL32 (57 aa).

This sequence belongs to the bacterial ribosomal protein bL32 family.

This is Large ribosomal subunit protein bL32 from Ureaplasma parvum serovar 3 (strain ATCC 27815 / 27 / NCTC 11736).